The sequence spans 435 residues: Trigger factor (435 aa).

The region spanning 162–247 (GDRINIDYRG…LSGVESSKLP (86 aa)) is the PPIase FKBP-type domain.

Belongs to the FKBP-type PPIase family. Tig subfamily.

It localises to the cytoplasm. It carries out the reaction [protein]-peptidylproline (omega=180) = [protein]-peptidylproline (omega=0). In terms of biological role, involved in protein export. Acts as a chaperone by maintaining the newly synthesized protein in an open conformation. Functions as a peptidyl-prolyl cis-trans isomerase. This is Trigger factor from Nitrosospira multiformis (strain ATCC 25196 / NCIMB 11849 / C 71).